Reading from the N-terminus, the 143-residue chain is EKC/KEOPS complex subunit LAGE3 (143 aa).

Residues 1–57 (MRDADADAGGGADGGDGRGGHSCRGGVDTAAAPAGGAPPAHAPGPGRDAASAARGSR) are disordered. The segment covering 30–55 (AAAPAGGAPPAHAPGPGRDAASAARG) has biased composition (low complexity).

It belongs to the CTAG/PCC1 family. Component of the EKC/KEOPS complex composed of at least GON7, TP53RK, TPRKB, OSGEP and LAGE3; the whole complex dimerizes. In terms of tissue distribution, ubiquitous.

It localises to the cytoplasm. Its subcellular location is the nucleus. Component of the EKC/KEOPS complex that is required for the formation of a threonylcarbamoyl group on adenosine at position 37 (t(6)A37) in tRNAs that read codons beginning with adenine. The complex is probably involved in the transfer of the threonylcarbamoyl moiety of threonylcarbamoyl-AMP (TC-AMP) to the N6 group of A37. LAGE3 functions as a dimerization module for the complex. The sequence is that of EKC/KEOPS complex subunit LAGE3 from Homo sapiens (Human).